The chain runs to 278 residues: MIALDQHLTEHKKDITQQWLEVCTSNGSWLYSAKDQQKLEQKLKDQHELLVTIVAKSLRKEDVEDELNRWSLQCARDRAVHEVTVTQSVGQFNTFRHIMFEWIHKFSEASSQDISIQEFYEWSRILNQNIDEIIEVFTEEYHQVTMIQLNAQKEMINELSAPIMPITDGIGILPLVGEIDTHRARTILESVLEQCSALKLSYLFLDISGVPIVDTMVAYQIFKVIDSTKLLGIETIISGIRPEIAQTVVKLGLDFSNVKTEQSLAKALANKGFKIKEC.

The STAS domain occupies 160-271 (SAPIMPITDG…QSLAKALANK (112 aa)). A Phosphothreonine modification is found at threonine 181.

In terms of assembly, probably present in the stressosome with RsbRA, RsbRB, RsbRC and RsbS. In terms of processing, phosphorylated by RsbT.

One of 4 functionally non-identical RsbR paralogs, it functions in the environmental signaling branch of the general stress response. Its function is as follows. Negative regulator of sigma-B activity. Non-phosphorylated RsbS binds to RsbT, preventing its association with RsbU. Requires any one of RsbRA, RsbRB, RsbRC or RsbRD to sequester RsbT. When RsbS and the RsbR paralog(s) are phosphorylated, they release RsbT, which can then bind and activate RsbU. The sequence is that of RsbT co-antagonist protein RsbRD (rsbRD) from Bacillus subtilis (strain 168).